Consider the following 536-residue polypeptide: Phosphoenolpyruvate carboxykinase (ATP) (536 aa).

Residues R61, Y195, and K201 each coordinate substrate. ATP contacts are provided by residues K201, H220, and 236-244 (GLSGTGKTT). The Mn(2+) site is built by K201 and H220. D257 lines the Mn(2+) pocket. Residues E285, R322, and T447 each contribute to the ATP site. R322 contacts substrate.

The protein belongs to the phosphoenolpyruvate carboxykinase (ATP) family. Mn(2+) serves as cofactor.

The protein resides in the cytoplasm. It carries out the reaction oxaloacetate + ATP = phosphoenolpyruvate + ADP + CO2. It participates in carbohydrate biosynthesis; gluconeogenesis. In terms of biological role, involved in the gluconeogenesis. Catalyzes the conversion of oxaloacetate (OAA) to phosphoenolpyruvate (PEP) through direct phosphoryl transfer between the nucleoside triphosphate and OAA. This is Phosphoenolpyruvate carboxykinase (ATP) from Chelativorans sp. (strain BNC1).